The primary structure comprises 86 residues: DNA-directed RNA polymerase subunit Rpo11 (86 aa).

This sequence belongs to the archaeal Rpo11/eukaryotic RPB11/RPC19 RNA polymerase subunit family. In terms of assembly, part of the RNA polymerase complex.

The protein localises to the cytoplasm. The catalysed reaction is RNA(n) + a ribonucleoside 5'-triphosphate = RNA(n+1) + diphosphate. Its function is as follows. DNA-dependent RNA polymerase (RNAP) catalyzes the transcription of DNA into RNA using the four ribonucleoside triphosphates as substrates. The polypeptide is DNA-directed RNA polymerase subunit Rpo11 (Archaeoglobus fulgidus (strain ATCC 49558 / DSM 4304 / JCM 9628 / NBRC 100126 / VC-16)).